A 273-amino-acid polypeptide reads, in one-letter code: MRLYRDRAVVLRQHKLGEADRIVSLLTREHGLVRAVAKGVRRTRSKFGARLEPFAHIDVQLHPGRNLDIVTQVQAIDAFASDIVSDYGRYTCACAMLETAERIAGEERAPVPALHRLTVAALRAVADGTRPRELVLDAYLLRAMGVAGWAPALIECARCAAPGPHRAFHVAAGGSVCVHCRPSGSVTPPQGVLDLMAALYDGDWEHAQISTPAHRSQASGLVAAHLQWHLERQLRTLPLVERPGRAEVARNIRQDMAHGNQAEEQLPPAASGA.

This sequence belongs to the RecO family.

Functionally, involved in DNA repair and RecF pathway recombination. The protein is DNA repair protein RecO of Mycolicibacterium gilvum (strain PYR-GCK) (Mycobacterium gilvum (strain PYR-GCK)).